The primary structure comprises 502 residues: MGSPFLNHRLRSELGDLALLHLRRDQTIPTILKLEDDENQGYKEGKVTNTRFGSFPHSTLIDQPWGSQIVASVVDTGSRGRKNQSSKKRKADDLDTPTSNKDEAQSSPGTPRAAASGFLHLLYPTPELWTASLPHRTQVVYTPDYSYILHRLCVRPGSTIIEAGAGSGSFTHASVRAVFNGYPSEAPAAKKRRLGKVCSFEFHAQRAQRIREEIHDHGLDALVEVTHRDVYEDGFLLGDPKTGKSPKANAIFLDLPAPWLALKHLVRRPPSGAESPLDPSSPVYICTFSPCIEQVQRTITTLREYSWLSISMVEVNHHRIDVKRERTGLDCEGVRGATVFPKSVDEAVAKMRAVEEHSRRFRESLLQESDDEGTASDKPAATKSGKTEVEEKSLQDISQHSDTTAAPSSTPSYDLGRLVHRTEPDLKTHTSYLVFAILPREWTEEDEQRCRQAWPAQKTGGSPDAGKPKGKKQLKREAKEKEVQEEAQKSEDVPARPQETQS.

The segment at 76-112 is disordered; that stretch reads TGSRGRKNQSSKKRKADDLDTPTSNKDEAQSSPGTPR. Residues 79-89 are compositionally biased toward basic residues; the sequence is RGRKNQSSKKR. S-adenosyl-L-methionine-binding positions include 167 to 169, glutamate 201, arginine 206, 229 to 230, and aspartate 254; these read SGS and DV. Disordered stretches follow at residues 365–417 and 444–502; these read LLQE…DLGR and EEDE…ETQS. Over residues 385–394 the composition is skewed to basic and acidic residues; that stretch reads GKTEVEEKSL. Residues 403–412 are compositionally biased toward low complexity; it reads TTAAPSSTPS. A compositionally biased stretch (basic and acidic residues) spans 475 to 494; it reads KREAKEKEVQEEAQKSEDVP.

This sequence belongs to the class I-like SAM-binding methyltransferase superfamily. TRM61 family. Heterotetramer; composed of two copies of TRM6 and two copies of TRM61.

It is found in the nucleus. It carries out the reaction adenosine(58) in tRNA + S-adenosyl-L-methionine = N(1)-methyladenosine(58) in tRNA + S-adenosyl-L-homocysteine + H(+). Its function is as follows. Catalytic subunit of tRNA (adenine-N(1)-)-methyltransferase, which catalyzes the formation of N(1)-methyladenine at position 58 (m1A58) in initiator methionyl-tRNA. This is tRNA (adenine(58)-N(1))-methyltransferase catalytic subunit trm61 (trm61) from Aspergillus fumigatus (strain ATCC MYA-4609 / CBS 101355 / FGSC A1100 / Af293) (Neosartorya fumigata).